We begin with the raw amino-acid sequence, 564 residues long: Proline--tRNA ligase (564 aa).

This sequence belongs to the class-II aminoacyl-tRNA synthetase family. ProS type 1 subfamily. Homodimer.

The protein localises to the cytoplasm. It carries out the reaction tRNA(Pro) + L-proline + ATP = L-prolyl-tRNA(Pro) + AMP + diphosphate. Its function is as follows. Catalyzes the attachment of proline to tRNA(Pro) in a two-step reaction: proline is first activated by ATP to form Pro-AMP and then transferred to the acceptor end of tRNA(Pro). As ProRS can inadvertently accommodate and process non-cognate amino acids such as alanine and cysteine, to avoid such errors it has two additional distinct editing activities against alanine. One activity is designated as 'pretransfer' editing and involves the tRNA(Pro)-independent hydrolysis of activated Ala-AMP. The other activity is designated 'posttransfer' editing and involves deacylation of mischarged Ala-tRNA(Pro). The misacylated Cys-tRNA(Pro) is not edited by ProRS. The protein is Proline--tRNA ligase of Xylella fastidiosa (strain M12).